Here is a 423-residue protein sequence, read N- to C-terminus: Lysosomal acid phosphatase (423 aa).

Residues 1–30 form the signal peptide; it reads MAGKRSGWSRAALLQLLLGVNLVVMPPTQA. Topologically, residues 31–380 are lumenal; the sequence is RSLRFVTLLY…QVASGPADTE (350 aa). The active-site Nucleophile is the H42. N92, N133, N167, N177, N191, and N267 each carry an N-linked (GlcNAc...) asparagine glycan. 3 cysteine pairs are disulfide-bonded: C159-C370, C212-C310, and C345-C349. Catalysis depends on D287, which acts as the Proton donor. N-linked (GlcNAc...) asparagine glycans are attached at residues N322 and N331. A helical transmembrane segment spans residues 381-401; it reads VIVALAVCGSILFLLIVLLLT. Residues 402–423 lie on the Cytoplasmic side of the membrane; the sequence is VLFRMQAQPPGYRHVADGEDHA.

This sequence belongs to the histidine acid phosphatase family. In terms of processing, the membrane-bound form is converted to the soluble form by sequential proteolytic processing. First, the C-terminal cytoplasmic tail is removed. Cleavage by a lysosomal protease releases the soluble form in the lysosome lumen.

It is found in the lysosome membrane. It localises to the lysosome lumen. It carries out the reaction a phosphate monoester + H2O = an alcohol + phosphate. The polypeptide is Lysosomal acid phosphatase (ACP2) (Pongo abelii (Sumatran orangutan)).